A 669-amino-acid chain; its full sequence is Probable serine/threonine-protein kinase DDB_G0291918 (669 aa).

Residues 13-360 enclose the Protein kinase domain; the sequence is YNNIKELGRG…LKETLNHPFL (348 aa). ATP contacts are provided by residues 19–27 and K42; that span reads LGRGVSGVV. Residue D141 is the Proton acceptor of the active site. The segment covering 396–405 has biased composition (low complexity); that stretch reads QNQQQQQQQQ. Disordered stretches follow at residues 396–518 and 530–550; these read QNQQ…APTF and FPKL…MNWR. Positions 406-418 are enriched in polar residues; it reads KSFSTSSLPQVNH. Low complexity-rich tracts occupy residues 419–449 and 457–494; these read NNDT…NNNN and QSNN…SSTD.

It belongs to the protein kinase superfamily. Ser/Thr protein kinase family.

It carries out the reaction L-seryl-[protein] + ATP = O-phospho-L-seryl-[protein] + ADP + H(+). The enzyme catalyses L-threonyl-[protein] + ATP = O-phospho-L-threonyl-[protein] + ADP + H(+). The protein is Probable serine/threonine-protein kinase DDB_G0291918 of Dictyostelium discoideum (Social amoeba).